Here is a 248-residue protein sequence, read N- to C-terminus: Phosphomannomutase (248 aa).

The Nucleophile role is filled by Asp-12. The Mg(2+) site is built by Asp-12 and Asp-14. The active-site Proton donor/acceptor is the Asp-14. Residues Arg-21, Arg-123, Arg-134, Arg-141, Ser-179, and Asp-181 each coordinate alpha-D-mannose 1-phosphate. Positions 207, 219, and 224 each coordinate Mg(2+).

This sequence belongs to the eukaryotic PMM family. In terms of assembly, homodimer. Mg(2+) serves as cofactor.

The protein resides in the cytoplasm. The enzyme catalyses alpha-D-mannose 1-phosphate = D-mannose 6-phosphate. It functions in the pathway nucleotide-sugar biosynthesis; GDP-alpha-D-mannose biosynthesis; alpha-D-mannose 1-phosphate from D-fructose 6-phosphate: step 2/2. Catalyzes the interconversion of mannose-6-phosphate to mannose-1-phosphate, the precursor for the synthesis of GDP-mannose. GDP-mannose is an essential sugar nucleotide for the synthesis of D-mannose-containing cell wall polysaccharides (galactomannans and glucomannans), glycolipids, glycoproteins and the antioxidant L-ascorbate. This Spinacia oleracea (Spinach) protein is Phosphomannomutase.